We begin with the raw amino-acid sequence, 365 residues long: Phospho-N-acetylmuramoyl-pentapeptide-transferase (365 aa).

10 consecutive transmembrane segments (helical) span residues 22–42 (YVSV…LFLG), 74–94 (TMGG…WGSL), 95–115 (SSIY…IGFF), 134–154 (KFAL…YLLS), 169–189 (LHIP…INGS), 201–221 (GLAI…AYIQ), 240–260 (LAEV…FLWF), 268–288 (FMGD…AVMI), 292–312 (LIFF…MLQV), and 342–362 (KVVI…LVAI).

Belongs to the glycosyltransferase 4 family. MraY subfamily. The cofactor is Mg(2+).

The protein localises to the cell inner membrane. The catalysed reaction is UDP-N-acetyl-alpha-D-muramoyl-L-alanyl-gamma-D-glutamyl-meso-2,6-diaminopimeloyl-D-alanyl-D-alanine + di-trans,octa-cis-undecaprenyl phosphate = di-trans,octa-cis-undecaprenyl diphospho-N-acetyl-alpha-D-muramoyl-L-alanyl-D-glutamyl-meso-2,6-diaminopimeloyl-D-alanyl-D-alanine + UMP. It functions in the pathway cell wall biogenesis; peptidoglycan biosynthesis. In terms of biological role, catalyzes the initial step of the lipid cycle reactions in the biosynthesis of the cell wall peptidoglycan: transfers peptidoglycan precursor phospho-MurNAc-pentapeptide from UDP-MurNAc-pentapeptide onto the lipid carrier undecaprenyl phosphate, yielding undecaprenyl-pyrophosphoryl-MurNAc-pentapeptide, known as lipid I. This is Phospho-N-acetylmuramoyl-pentapeptide-transferase from Francisella philomiragia subsp. philomiragia (strain ATCC 25017 / CCUG 19701 / FSC 153 / O#319-036).